The chain runs to 300 residues: MVKQRTLNRVVKASGIGLHSGQKVMINFIPHTVDGGIVFRRIDLDPPVDIPANALLIQEAFMCSNLVTGDIKVGTIEHVMSAIAGLGIDNLIVEVSASEVPIMDGSAGPFIYLLMQGGLREQDAPKKFIKILKPVEALIDDKKAIFSPHNGFQLNFTIDFDHPAFAKEYQSATIDFSTETFVYEVSEARTFGFMKDLDYLKANNLALGASLDNAIGVDDTGVVNEEGLRFADEFVRHKILDAVGDLYLLGHQIIAKFDGYKSGHALNNQLLRNVQSDPSNYEIVTFDDEKDCPIPYVSVT.

Positions 78, 237, and 241 each coordinate Zn(2+). His-264 acts as the Proton donor in catalysis.

This sequence belongs to the LpxC family. It depends on Zn(2+) as a cofactor.

It catalyses the reaction a UDP-3-O-[(3R)-3-hydroxyacyl]-N-acetyl-alpha-D-glucosamine + H2O = a UDP-3-O-[(3R)-3-hydroxyacyl]-alpha-D-glucosamine + acetate. The protein operates within glycolipid biosynthesis; lipid IV(A) biosynthesis; lipid IV(A) from (3R)-3-hydroxytetradecanoyl-[acyl-carrier-protein] and UDP-N-acetyl-alpha-D-glucosamine: step 2/6. Catalyzes the hydrolysis of UDP-3-O-myristoyl-N-acetylglucosamine to form UDP-3-O-myristoylglucosamine and acetate, the committed step in lipid A biosynthesis. The chain is UDP-3-O-acyl-N-acetylglucosamine deacetylase from Acinetobacter baumannii (strain AB307-0294).